The following is a 63-amino-acid chain: Jingdongin-1-MT1 (63 aa).

An N-terminal signal peptide occupies residues 1–22 (MFTLKKSLLLLFFLGTINLSLC). The propeptide at 23–44 (EQERDADEEERRDDDEMDVEVE) is removed in mature form. The cysteines at positions 57 and 63 are disulfide-linked.

Belongs to the frog skin active peptide (FSAP) family. Brevinin subfamily. As to expression, expressed by the skin glands.

It is found in the secreted. Functionally, antimicrobial peptide. Active against some Gram-negative and a variety of Gram-positive bacterial strains. Active against fungus C.glabrata 090902 but not against C.neoformans 201211. Shows hemolytic activity against human erythrocytes. The protein is Jingdongin-1-MT1 of Amolops mantzorum (Sichuan torrent frog).